The chain runs to 545 residues: Carboxylesterase 5A (545 aa).

A signal peptide spans 1–28 (MSGMWVHPGRTLIWALWVLAAVIKGPAA). A glycan (N-linked (GlcNAc...) (complex) asparagine) is linked at N86. C94 and C121 are oxidised to a cystine. N134 carries N-linked (GlcNAc...) asparagine glycosylation. S226 (acyl-ester intermediate) is an active-site residue. C281 and C292 are disulfide-bonded. E346 (charge relay system) is an active-site residue. 2 N-linked (GlcNAc...) asparagine glycosylation sites follow: N363 and N443. The active-site Charge relay system is the H454.

Belongs to the type-B carboxylesterase/lipase family. In terms of processing, N-glycosylated; contains a fucosylated complex carbohydrate. Present at high level in urine. Expressed in the kidney proximal straight tubular cells and is secreted from the apical compartment of the cells into the urine (at protein level). In mature cats, it is present at higher level in intact males than in castrated males or in intact or spayed females.

Its subcellular location is the secreted. It carries out the reaction a carboxylic ester + H2O = an alcohol + a carboxylate + H(+). Carboxylesterase present at high level in urine that regulates production of felinine, a probable pheromone precursor. Probably acts by hydrolyzing the peptide bond of the felinine precursor 3-methylbutanol cyteinylglycine, producing felinine and glycine in cat urine. The sequence is that of Carboxylesterase 5A (CES5A) from Felis catus (Cat).